Consider the following 550-residue polypeptide: Parathyroid hormone 2 receptor (550 aa).

The first 24 residues, 1–24 (MAGLGASLHVWGWLMLGSCLLARA), serve as a signal peptide directing secretion. Residues 27–145 (DSDGTITIEE…GKQEFFERLY (119 aa)) are Extracellular-facing. N-linked (GlcNAc...) asparagine glycans are attached at residues Asn-51, Asn-106, Asn-116, and Asn-121. A helical transmembrane segment spans residues 146–169 (VMYTVGYSISFGSLAVAILIIGYF). At 170–176 (RRLHCTR) the chain is on the cytoplasmic side. Residues 177–196 (NYIHMHLFVSFMLRATSIFV) traverse the membrane as a helical segment. At 197–237 (KDRVVHAHIGVKELESLIMQDDPQNSIEATSVDKSQYIGCK) the chain is on the extracellular side. The chain crosses the membrane as a helical span at residues 238-260 (IAVVMFIYFLATNYYWILVEGLY). Residues 261 to 275 (LHNLIFVAFFSDTKY) lie on the Cytoplasmic side of the membrane. A helical membrane pass occupies residues 276–297 (LWGFILIGWGFPAAFVAAWAVA). The Extracellular portion of the chain corresponds to 298-316 (RATLADARCWELSAGDIKW). Residues 317–337 (IYQAPILAAIGLNFILFLNTV) form a helical membrane-spanning segment. At 338–364 (RVLATKIWETNAVGHDTRKQYRKLAKS) the chain is on the cytoplasmic side. Residues 365 to 383 (TLVLVLVFGVHYIVFVCLP) form a helical membrane-spanning segment. The Extracellular segment spans residues 384 to 394 (HSFTGLGWEIR). A helical membrane pass occupies residues 395-417 (MHCELFFNSFQGFFVSIIYCYCN). Residues 418–550 (GEVQAEVKKM…GCQGETEDVL (133 aa)) are Cytoplasmic-facing. The segment covering 511-531 (EETKEDSGRQGDDILMEKPSR) has biased composition (basic and acidic residues). A disordered region spans residues 511–550 (EETKEDSGRQGDDILMEKPSRPMESNPDTEGCQGETEDVL).

It belongs to the G-protein coupled receptor 2 family. In terms of assembly, binds to TIPF39/TIP39. In terms of tissue distribution, expressed abundantly in brain and pancreas. Also expressed in the testis.

The protein resides in the cell membrane. Functionally, this is a specific receptor for parathyroid hormone. The activity of this receptor is mediated by G proteins which activate adenylyl cyclase. PTH2R may be responsible for PTH effects in a number of physiological systems. It may play a significant role in pancreatic function. PTH2R presence in neurons indicates that it may function as a neurotransmitter receptor. The polypeptide is Parathyroid hormone 2 receptor (PTH2R) (Homo sapiens (Human)).